Consider the following 135-residue polypeptide: MSEFKRLMRLKLKMKQKRPEFKRQDWFKCSRIGTSWRRPFGKHSGMRIGLTHRAAVVNTGYRGPVLVRGLHPSGLQDILVNNVKELVALNPEVQGARIAATVGKRKRIEIVKKANELGIRVFNVSKQKQEEFLSL.

It belongs to the eukaryotic ribosomal protein eL32 family.

This chain is Large ribosomal subunit protein eL32 (rpl32e), found in Methanococcus maripaludis (strain DSM 14266 / JCM 13030 / NBRC 101832 / S2 / LL).